A 118-amino-acid polypeptide reads, in one-letter code: D-dopachrome decarboxylase (118 aa).

Pro-2 carries the N-acetylproline modification.

The protein belongs to the MIF family. As to quaternary structure, homotrimer.

The protein localises to the cytoplasm. It catalyses the reaction D-dopachrome + H(+) = 5,6-dihydroxyindole + CO2. Functionally, tautomerization of D-dopachrome with decarboxylation to give 5,6-dihydroxyindole (DHI). The protein is D-dopachrome decarboxylase (DDT) of Gallus gallus (Chicken).